Consider the following 1008-residue polypeptide: Collagen, type I, alpha 1a (1008 aa).

Positions 1 to 21 are enriched in pro residues; that stretch reads SPAMPVPGPMGPMGPRGPPGS. A disordered region spans residues 1-920; that stretch reads SPAMPVPGPM…PQEKAPDPFR (920 aa). Over residues 39–53 the composition is skewed to basic and acidic residues; sequence NGEDGESGKPGRGGE. Over residues 92-117 the composition is skewed to low complexity; sequence TPGAMGPRGAAGAAGARGNDGAAGAA. The span at 119–132 shows a compositional bias: pro residues; it reads PPGPTGPAGPPGFP. Residues 133–151 are compositionally biased toward gly residues; the sequence is GGPGAKGDAGAQGGRGPEG. 2 stretches are compositionally biased toward low complexity: residues 152 to 195 and 204 to 230; these read PAGA…AGAP and SGPQ…APGV. A compositionally biased stretch (gly residues) spans 253–265; the sequence is GARGGPGGRGFPG. Composition is skewed to low complexity over residues 339-354 and 410-422; these read VGAR…PGPK and LPGE…PAGA. Over residues 423 to 435 the composition is skewed to basic and acidic residues; that stretch reads RGDRGFPGERGAK. 3 stretches are compositionally biased toward low complexity: residues 437-456, 489-524, and 537-573; these read DAGA…QGMP, RGLT…ARGA, and AGFA…AGPT. Pro residues predominate over residues 604 to 617; the sequence is PPGPSGNPGPPGPA. Residues 634 to 661 are compositionally biased toward low complexity; sequence PAGRPGELGAAGPPGPAGEKGSPGSEGA. Over residues 696-709 the composition is skewed to gly residues; sequence GEAGGPSGPGGERG. Residues 717–735 are compositionally biased toward low complexity; that stretch reads PGLAGAPGEPGREGSPGNE. Residues 761–771 are compositionally biased toward pro residues; it reads APGPPGAPGPV. The span at 785-806 shows a compositional bias: low complexity; the sequence is PAGPAGSAGPSGPRGPAGAPGL. The span at 807–821 shows a compositional bias: basic and acidic residues; sequence RGDKGESGEAGERRG. Low complexity predominate over residues 832 to 868; that stretch reads SGSSGEQGPAGAAGPAGPRGPAGSAGSPGKDGMSGLP. A compositionally biased stretch (pro residues) spans 884 to 896; the sequence is AGPPGPPGPPGAP. Residues 978–1008 form the Fibrillar collagen NC1 domain; sequence TSRLPLLDLAPMDVGAPDQEFGLEVGPVCFL.

The protein belongs to the fibrillar collagen family.

The protein localises to the secreted. It localises to the extracellular space. The protein resides in the extracellular matrix. The protein is Collagen, type I, alpha 1a of Epinephelus aeneus (White grouper).